The sequence spans 247 residues: NCT transcriptional regulatory complex subunit A (247 aa).

Basic and acidic residues predominate over residues 1-12 (MTDQDSTYRPRS). 3 disordered regions span residues 1 to 31 (MTDQ…SPIY), 48 to 82 (FFAP…SPDM), and 212 to 247 (VPDQ…DDSD). Over residues 13 to 22 (PDLSTFQSSI) the composition is skewed to polar residues.

It belongs to the NC2 alpha/DRAP1 family. In terms of assembly, forms the NCT transcriptional regulatory complex with nctB and mot1.

The protein resides in the nucleus. In terms of biological role, part of the NCT transcriptional regulatory complex that acts as a key regulator of ergosterol biosynthesis and the azole exporter cdr1B. The NCT complex binds the promoters of genes linked to azole susceptibility, and especially represses the expression of cdr1B transporter. This chain is NCT transcriptional regulatory complex subunit A, found in Aspergillus fumigatus (strain CBS 144.89 / FGSC A1163 / CEA10) (Neosartorya fumigata).